Consider the following 1441-residue polypeptide: Cleavage and polyadenylation specificity factor subunit 1 (1441 aa).

Disordered stretches follow at residues 404-435 (PASSVREAADKEEPPSKKKRVEPAVGWTGGKT), 545-569 (EEETPKAESTEQEPSAPKAEEDGRR), 713-775 (GGAR…PAPF), and 899-921 (FREKKPKPSKKKAEGCSTEEGSG). Residues 410 to 419 (EAADKEEPPS) show a composition bias toward basic and acidic residues. Phosphoserine occurs at positions 754 and 764. A compositionally biased stretch (basic and acidic residues) spans 756 to 773 (SKEEARRSSQPPADRDPA).

This sequence belongs to the CPSF1 family. In terms of assembly, component of the cleavage and polyadenylation specificity factor (CPSF) complex, composed of CPSF1, CPSF2, CPSF3, CPSF4 and FIP1L1. Found in a complex with CPSF1, FIP1L1 and PAPOLA. Interacts with FIP1L1 and SRRM1. Interacts with TUT1; the interaction is direct and mediates the recruitment of the CPSF complex on the 3'UTR of selected pre-mRNAs. Interacts with TENT2/GLD2.

The protein localises to the nucleus. The protein resides in the nucleoplasm. Component of the cleavage and polyadenylation specificity factor (CPSF) complex that plays a key role in pre-mRNA 3'-end formation, recognizing the AAUAAA signal sequence and interacting with poly(A) polymerase and other factors to bring about cleavage and poly(A) addition. This subunit is involved in the RNA recognition step of the polyadenylation reaction. May play a role in eye morphogenesis and the development of retinal ganglion cell projections to the midbrain. This Mus musculus (Mouse) protein is Cleavage and polyadenylation specificity factor subunit 1 (Cpsf1).